The chain runs to 549 residues: Glucose-6-phosphate isomerase (549 aa).

Residue E355 is the Proton donor of the active site. Residues H386 and K514 contribute to the active site.

It belongs to the GPI family.

The protein localises to the cytoplasm. The enzyme catalyses alpha-D-glucose 6-phosphate = beta-D-fructose 6-phosphate. Its pathway is carbohydrate biosynthesis; gluconeogenesis. It functions in the pathway carbohydrate degradation; glycolysis; D-glyceraldehyde 3-phosphate and glycerone phosphate from D-glucose: step 2/4. In terms of biological role, catalyzes the reversible isomerization of glucose-6-phosphate to fructose-6-phosphate. This is Glucose-6-phosphate isomerase from Desulfatibacillum aliphaticivorans.